The following is a 177-amino-acid chain: Large ribosomal subunit protein uL6 (177 aa).

It belongs to the universal ribosomal protein uL6 family. Part of the 50S ribosomal subunit.

Its function is as follows. This protein binds to the 23S rRNA, and is important in its secondary structure. It is located near the subunit interface in the base of the L7/L12 stalk, and near the tRNA binding site of the peptidyltransferase center. The protein is Large ribosomal subunit protein uL6 of Pseudomonas fluorescens (strain ATCC BAA-477 / NRRL B-23932 / Pf-5).